We begin with the raw amino-acid sequence, 230 residues long: Demethylmenaquinone methyltransferase (230 aa).

Residues threonine 62, aspartate 80, 100-101, and serine 117 each bind S-adenosyl-L-methionine; that span reads DG.

The protein belongs to the class I-like SAM-binding methyltransferase superfamily. MenG/UbiE family.

The enzyme catalyses a 2-demethylmenaquinol + S-adenosyl-L-methionine = a menaquinol + S-adenosyl-L-homocysteine + H(+). Its pathway is quinol/quinone metabolism; menaquinone biosynthesis; menaquinol from 1,4-dihydroxy-2-naphthoate: step 2/2. Its function is as follows. Methyltransferase required for the conversion of demethylmenaquinol (DMKH2) to menaquinol (MKH2). This Corynebacterium efficiens (strain DSM 44549 / YS-314 / AJ 12310 / JCM 11189 / NBRC 100395) protein is Demethylmenaquinone methyltransferase.